The sequence spans 205 residues: Ribonuclease HII (205 aa).

The 188-residue stretch at 14–201 (EIIAGVDEAG…KGNINHSAIL (188 aa)) folds into the RNase H type-2 domain. Residues Asp-20, Glu-21, and Asp-111 each contribute to the a divalent metal cation site.

This sequence belongs to the RNase HII family. Mn(2+) is required as a cofactor. The cofactor is Mg(2+).

The protein localises to the cytoplasm. The enzyme catalyses Endonucleolytic cleavage to 5'-phosphomonoester.. In terms of biological role, endonuclease that specifically degrades the RNA of RNA-DNA hybrids. The polypeptide is Ribonuclease HII (Orientia tsutsugamushi (strain Ikeda) (Rickettsia tsutsugamushi)).